We begin with the raw amino-acid sequence, 415 residues long: MIKVADLNIPVIEDFDINGRKVLLRIDINSPVDRKTGKLLDDSRIKAHAETIRELLDKQNSVVIISHQGRPGDDDFISLEEHSKILSKYVGREIEFVDDVIGPYAREKISKLGKGEAILLENVRIVSEELIEAPPQQQSKTFLVRKLAPLVDFYINDAFATAHRSQPSLVGFPLVKPSAAGRIMEKEVSALSKIFNKEDSPKIFVLGGSKVSDTLKIIEHLAKNRVADRILTGGLVAELFAVAKGINLGKPNMQVLENKGLLSLIPRARKILLSGAPIEIPVDFTVEKPSGELSNDPENNVSGIIKDIGNTTIEIYSSFIKEGKVITLRGPMGVIEDERFRIGTKSLLKASIESPGYVIIGGGHMISMLDKDVEINPNKIHVSTGGGALLLFLAGDKLPALEALHMSWVMQSGKS.

Substrate-binding positions include 27 to 29, Arg-44, 67 to 70, Arg-124, and Arg-164; these read DIN and HQGR. Residues Glu-336 and 362–365 each bind ATP; that span reads GGHM.

It belongs to the phosphoglycerate kinase family. Monomer.

The protein resides in the cytoplasm. It carries out the reaction (2R)-3-phosphoglycerate + ATP = (2R)-3-phospho-glyceroyl phosphate + ADP. It participates in carbohydrate degradation; glycolysis; pyruvate from D-glyceraldehyde 3-phosphate: step 2/5. The polypeptide is Phosphoglycerate kinase (Sulfurisphaera tokodaii (strain DSM 16993 / JCM 10545 / NBRC 100140 / 7) (Sulfolobus tokodaii)).